The sequence spans 859 residues: MKAMHTFENHTPMMKQYLKIKAENPDVLLFYRMGDFYELFYDDAKKAAELLDISLTKRGQSAGQPVPMAGVPYHAIEGYLAKLVQLGESVAICEQVGEPVIAKGPVERQVVRIVTPGTVSDEALLPEKQDNLIATIYQEKTQFGLAVLDMTSGCFQISELQDAASLQAELQRIQPVELLYSEALEDKHLIEQFKGLRRRPLWEFELSTAIQLLNRQFGTKDLRGFGVEKAVLGLCAAGCLLQYAKETQRTALPHIQSISLLQNSDTVQIDASTRRNLELTQNLAGGTENTLAAILDKCVTPMGSRLLKRWIHQPIRNIEKLQYRQQHIQMLLQQNLVEELQPLLRQVGDMERILARVALRSARPRDLTRLRTALEQIPFIQHQLTKIPHFVAFSQQIADFSVQLALLQRAIIDNPPLLIRDGGVIAEGYNEELDEWRSLSEGATRYLKDLEQRERANTGIDTLKIGFNAVHGYYIQISQGQAHKAPLHYVRRQTLKNVERYIIPELKTYEEKVLKAKGASLALEKQLYDEIFDQLLPHLGDLQLASLTLAELDVLTNLAERAETLNYVQPQFSTQVGLQIMQGRHPVVEQVLKEPFIANPVELNQKRHLLIITGPNMGGKSTYMRQTALITLMAYIGSFVPAESAVIGPIDRIFTRIGASDDLASGRSTFMVEMTEMANILHQATEQSLVLIDEIGRGTSTYDGLSLAWACAEQLAQKIRSLTLFATHYFELTGLPEKIEGIHNVHLDAFEHNDSIAFMHSVQEGAASKSYGLAVAALAGVPQNVIKSAKQKLKQLETLSQQNSYQSQSVLTQVQGELTLMEEEENTSAVIETLKTLDPNELSPKQALECLYQLKKMLN.

Residue 614–621 participates in ATP binding; sequence GPNMGGKS.

The protein belongs to the DNA mismatch repair MutS family.

Its function is as follows. This protein is involved in the repair of mismatches in DNA. It is possible that it carries out the mismatch recognition step. This protein has a weak ATPase activity. This is DNA mismatch repair protein MutS from Histophilus somni (strain 2336) (Haemophilus somnus).